A 232-amino-acid chain; its full sequence is BTB/POZ domain-containing protein KCTD11 (232 aa).

Residues 1–49 (MLGAMFRAGTPMPPNLNSQGGGHYFIDRDGKAFRHILNFLRLGRLDLPR) enclose the BTB domain.

As to quaternary structure, homopentamer. Interacts with KCTD6 and KCTD21; KCTD11 and KCTD6 or KCTD21 may associate in pentameric assemblies. Component of the BCR(KCTD11) E3 ubiquitin ligase complex, at least composed of CUL3 and KCTD11 and RBX1. Interacts (via BTB domain) with CUL3; initially a 4:4 stoichiometry has been reported, however, electron microscopy revealed pentameric states of the BTB domain. As to expression, higher expression in cerebellum than in whole brain and lower expression in medulloblastoma.

It participates in protein modification; protein ubiquitination. Functionally, plays a role as a marker and a regulator of neuronal differentiation; Up-regulated by a variety of neurogenic signals, such as retinoic acid, epidermal growth factor/EGF and NGFB/nerve growth factor. Induces apoptosis, growth arrest and the expression of cyclin-dependent kinase inhibitor CDKN1B. Plays a role as a tumor repressor and inhibits cell growth and tumorigenicity of medulloblastoma (MDB). Acts as a probable substrate-specific adapter for a BCR (BTB-CUL3-RBX1) E3 ubiquitin-protein ligase complex towards HDAC1. Functions as antagonist of the Hedgehog pathway on cell proliferation and differentiation by affecting the nuclear transfer of transcription factor GLI1, thus maintaining cerebellar granule cells in undifferentiated state, this effect probably occurs via HDAC1 down-regulation, keeping GLI1 acetylated and inactive. When knock-down, Hedgehog antagonism is impaired and proliferation of granule cells is sustained. Activates the caspase cascade. The polypeptide is BTB/POZ domain-containing protein KCTD11 (KCTD11) (Homo sapiens (Human)).